The following is a 250-amino-acid chain: MRVDLNCDLGEAFGNYSFGGDHQIIPLITSANVACGFHAGDENVMNETVKLAKAHNVAVGAHPGLPDLKGFGRRNIDISNEEIYNLMIYQLGALQGFCRIHQVKINHVKPHGALYQMGAKDREIASVIAQAVYDFDPSLVLVGLANSYLISEAKNVGLITASEVFADRRYEDDGQLVSRKESDAVITDTDEALKQVLKMVKENKVISKNNKEVTLQADTICVHGDGEHALLFVSKIREILMKEGIDIQSL.

This sequence belongs to the LamB/PxpA family. Forms a complex composed of PxpA, PxpB and PxpC.

It catalyses the reaction 5-oxo-L-proline + ATP + 2 H2O = L-glutamate + ADP + phosphate + H(+). Its function is as follows. Catalyzes the cleavage of 5-oxoproline to form L-glutamate coupled to the hydrolysis of ATP to ADP and inorganic phosphate. This is 5-oxoprolinase subunit A from Staphylococcus aureus (strain bovine RF122 / ET3-1).